An 88-amino-acid chain; its full sequence is Small ribosomal subunit protein uS17 (88 aa).

It belongs to the universal ribosomal protein uS17 family. As to quaternary structure, part of the 30S ribosomal subunit.

One of the primary rRNA binding proteins, it binds specifically to the 5'-end of 16S ribosomal RNA. The sequence is that of Small ribosomal subunit protein uS17 from Oenococcus oeni (strain ATCC BAA-331 / PSU-1).